Reading from the N-terminus, the 694-residue chain is Frizzled-2 (694 aa).

Residues 1 to 22 (MRHNRLKVLILGLVLLLTSCRA) form the signal peptide. Residues 23 to 315 (DGPLHSADHG…GPFFSNDEKD (293 aa)) are Extracellular-facing. Residues 59 to 180 (DPNLRCEEIT…GDPDNLCMEQ (122 aa)) enclose the FZ domain. 5 disulfide bridges follow: Cys-64/Cys-125, Cys-72/Cys-118, Cys-109/Cys-147, Cys-136/Cys-177, and Cys-140/Cys-164. N-linked (GlcNAc...) asparagine glycosylation occurs at Asn-78. Residues 175 to 253 (NLCMEQPSYT…QGEKASGKEC (79 aa)) are disordered. The span at 187–224 (GSGGSSGGSGGSGSGSGSGGKRKQGGSGSGGSGAGGSS) shows a compositional bias: gly residues. Asn-288 carries N-linked (GlcNAc...) asparagine glycosylation. Residues 316 to 336 (FAGLWIALWSGLCFCSTLMTL) form a helical membrane-spanning segment. The Cytoplasmic segment spans residues 337-352 (TTFIIDTERFKYPERP). Residues 353-373 (IVFLSACYFMVAVGYLSRNFL) traverse the membrane as a helical segment. The Extracellular segment spans residues 374–397 (QNEEIACDGLLLRESSTGPHSCTL). The chain crosses the membrane as a helical span at residues 398 to 418 (VFLLTYFFGMASSIWWVILSF). The Cytoplasmic segment spans residues 419–439 (TWFLAAGLKWGNEAITKHSQY). Residues 440–460 (FHLAAWLIPTVQSVAVLLLSA) form a helical membrane-spanning segment. The Extracellular portion of the chain corresponds to 461-482 (VDGDPILGICYVGNLNPDHLKT). A helical membrane pass occupies residues 483 to 503 (FVLAPLFVYLVIGTTFLMAGF). Residues 504-534 (VSLFRIRSVIKQQGGVGAGVKADKLEKLMIR) are Cytoplasmic-facing. The helical transmembrane segment at 535-555 (IGIFSVLYTVPATIVIGCYLY) threads the bilayer. Residues 556–584 (EAAYFEDWIKALACPCAQVKGPGKKPLYS) lie on the Extracellular side of the membrane. The chain crosses the membrane as a helical span at residues 585–605 (VLMLKYFMALAVGITSGVWIW). At 606–694 (SGKTLESWRR…VLKQPAASHV (89 aa)) the chain is on the cytoplasmic side. The Lys-Thr-X-X-X-Trp motif, mediates interaction with the PDZ domain of Dvl family members signature appears at 608–613 (KTLESW). A PDZ-binding motif is present at residues 692 to 694 (SHV).

This sequence belongs to the G-protein coupled receptor Fz/Smo family. In terms of assembly, interacts with ATP6AP2.

It localises to the cell membrane. In terms of biological role, receptor for Wnt proteins. Most of frizzled receptors are coupled to the beta-catenin canonical signaling pathway, which leads to the activation of disheveled proteins, inhibition of GSK-3 kinase, nuclear accumulation of beta-catenin and activation of Wnt target genes. A second signaling pathway involving PKC and calcium fluxes has been seen for some family members, but it is not yet clear if it represents a distinct pathway or if it can be integrated in the canonical pathway, as PKC seems to be required for Wnt-mediated inactivation of GSK-3 kinase. Both pathways seem to involve interactions with G-proteins. Required to coordinate the cytoskeletons of epidermal cells to produce a parallel array of cuticular hairs and bristles. This Drosophila melanogaster (Fruit fly) protein is Frizzled-2 (fz2).